We begin with the raw amino-acid sequence, 403 residues long: Esterase LipC (403 aa).

Catalysis depends on residues Ser-237, Asp-334, and His-367.

Belongs to the 'GDXG' lipolytic enzyme family.

Its subcellular location is the cell surface. It localises to the secreted. It is found in the cell wall. The protein resides in the capsule. The catalysed reaction is a fatty acid ester + H2O = an aliphatic alcohol + a fatty acid + H(+). The enzyme catalyses a butanoate ester + H2O = an aliphatic alcohol + butanoate + H(+). It catalyses the reaction a hexanoate ester + H2O = an aliphatic alcohol + hexanoate + H(+). It carries out the reaction an acetyl ester + H2O = an aliphatic alcohol + acetate + H(+). The catalysed reaction is an octanoate ester + H2O = an aliphatic alcohol + octanoate + H(+). The enzyme catalyses decanoate ester + H2O = decanoate + an aliphatic alcohol + H(+). Functionally, esterase that can hydrolyze short-chain esters with the carbon chain containing 2 to 10 carbon atoms. Does not have lipase activity. Is highly immunogenic and elicits strong humoral immune responses in both HIV-negative (HIV-) and HIV-positive (HIV+) tuberculosis (TB) patients. Also elicits pro-inflammatory cytokine and chemokine responses from macrophages and pulmonary epithelial cells. May participate in the progression of active tuberculosis both by contributing to the utilization of lipid substrates for bacterial growth and replication, and by modulating immune responses. The protein is Esterase LipC of Mycobacterium tuberculosis (strain ATCC 25618 / H37Rv).